We begin with the raw amino-acid sequence, 399 residues long: Salivary protein Tsal1 (399 aa).

Positions 1-22 are cleaved as a signal peptide; the sequence is MALKLVYGVFTLALLGISSVNA. N-linked (GlcNAc...) asparagine glycosylation is present at asparagine 268.

Belongs to the DNA/RNA non-specific endonuclease family. Requires a divalent metal cation as cofactor. In terms of tissue distribution, saliva (at protein level).

Its subcellular location is the secreted. Functionally, binds double-stranded DNA (dsDNA) with high affinity. Binds double-stranded RNA. Binds single-stranded DNA with lower affinity and with a preference for purine-rich sequences. Shows residual nuclease activity for dsDNA. May facilitate blood meal intake by lowering the local viscosity created by the release of host DNA. In Glossina morsitans morsitans (Savannah tsetse fly), this protein is Salivary protein Tsal1.